The sequence spans 191 residues: Photosystem I assembly protein Ycf4 (191 aa).

The next 2 helical transmembrane spans lie at 34 to 54 (VASMLSIGGVGFLLASFSSYF) and 68 to 88 (IFVPQGLVMGLYGLAAFLLAI).

It belongs to the Ycf4 family.

Its subcellular location is the cellular thylakoid membrane. Functionally, seems to be required for the assembly of the photosystem I complex. The protein is Photosystem I assembly protein Ycf4 of Prochlorococcus marinus (strain NATL1A).